The chain runs to 588 residues: MFVLPPPPPRYTIPVAYAAGASNGMAVPVVETNNVITKPEGGCPLQVGEGTYHLQDDLHLATPPPHPSEAPIINPNPLATVPTPPTSGVKLSLVNIGPRNKNPVFAMKESVLAPPFGDGNPALAAPAVKDGLKRRKPKNNIIKSSSSFVSRVITHEASTKRLNDRNPEGLFAFANINRAFQWLDLGSKQKEEPLAKILFTKAHMLSHDINELTKSASHIDVVMGSSAGDIIWYEPISQKYARINKNGVVCNSPVTHIKWVPGSENLFMAAHANGQLVVYDKEKEDALFTPEEPVKSSGQQPLQVLKSVNSRNQKTNPVALWKLANQKITQFAFSPDQRHLAVVLEDGSLRVMDYLEEEVLDIFRSYYGGLICVCWSPDGKYIVTGGQDDLVTIWSFPERKIVARCQGHNSWVSTVAFDPWRCDERTYRFGSVGDDCRLLLWDFSVGMLHRPRAHQASTRQRTSMITSNSQHASRHRADSAGNRARSDSQRTADGYDEYDQAVRHPVEPRARTALLPPIMSKEIGSDPICWLGFQEDSIMTSSLEGHIRTWDRPREGINDTYNAHASSSAISAGAGSGSAVANSARGSL.

4 WD repeats span residues 249-289 (VCNS…ALFT), 323-364 (LANQ…DIFR), 365-404 (SYYG…IVAR), and 407-451 (GHNS…LHRP). The segment at 452–499 (RAHQASTRQRTSMITSNSQHASRHRADSAGNRARSDSQRTADGYDEYD) is disordered. Residues 455–471 (QASTRQRTSMITSNSQH) show a composition bias toward polar residues. The stretch at 523–560 (IGSDPICWLGFQEDSIMTSSLEGHIRTWDRPREGINDT) is one WD 5 repeat. The tract at residues 569-588 (AISAGAGSGSAVANSARGSL) is disordered.

The protein belongs to the WD repeat creC family. Interacts with creB.

Functionally, component of the regulatory network controlling carbon source utilization through ubiquitination and deubiquitination involving creA, creB, creC, creD and acrB. Required to prevent the proteolysis of the CreB deubiquitinating enzyme in the absence of carbon catabolite repression. CreB deubiquitinating enzyme stabilized in a complex with the CreC leads to the expression of genes such as those in the proline and quinate pathways. This is Probable catabolite repression protein creC (creC) from Aspergillus terreus (strain NIH 2624 / FGSC A1156).